The following is a 434-amino-acid chain: D-amino acid dehydrogenase (434 aa).

3–17 (VLVLGSGVIGTTSAW) contributes to the FAD binding site.

It belongs to the DadA oxidoreductase family. The cofactor is FAD.

It catalyses the reaction a D-alpha-amino acid + A + H2O = a 2-oxocarboxylate + AH2 + NH4(+). It functions in the pathway amino-acid degradation; D-alanine degradation; NH(3) and pyruvate from D-alanine: step 1/1. Oxidative deamination of D-amino acids. In Stenotrophomonas maltophilia (strain K279a), this protein is D-amino acid dehydrogenase.